The following is a 990-amino-acid chain: Envelope glycoprotein gp160 (990 aa).

The signal sequence occupies residues 1–107 (MASSKNMPSR…CLIWEMGKKH (107 aa)). Topologically, residues 108-838 (SCNAEEVIAL…WSGWFSWLKY (731 aa)) are extracellular. N-linked (GlcNAc...) asparagine; by host glycosylation is found at Asn141, Asn162, Asn207, Asn259, Asn299, Asn363, Asn386, Asn402, Asn413, Asn434, Asn438, Asn469, Asn474, Asn480, Asn490, Asn500, Asn514, Asn526, Asn536, Asn542, Asn550, Asn560, and Asn567. A fusion peptide region spans residues 663-683 (GIGLVIVLAIMAIIAAAGAGL). Positions 695 to 745 (RTAVQSLANATAAQQNVLEATYAMVQHVAKGVRILEARVARVEAIVDRMML) form a coiled coil. Residue Asn703 is glycosylated (N-linked (GlcNAc...) asparagine; by host). Residues 729 to 745 (LEARVARVEAIVDRMML) are immunosuppression. Asn771, Asn778, and Asn794 each carry an N-linked (GlcNAc...) asparagine; by host glycan. A coiled-coil region spans residues 786-821 (EEIEQHEANLSLLLKEAALQVQIAQRDAQRIPDVWK). A helical transmembrane segment spans residues 839-859 (IPWIVVCIVGVICFRLLMCVI). Residues 860–990 (TMCLQAYRQV…AIENEYVELS (131 aa)) are Cytoplasmic-facing. Cys862 is lipidated: S-palmitoyl cysteine; by host. A disordered region spans residues 890–909 (KQREERDGSSGSENLEHEKR).

As to quaternary structure, the mature envelope protein (Env) consists of a trimer of SU-TM heterodimers attached by noncovalent interactions or by a labile interchain disulfide bond. In terms of processing, specific enzymatic cleavages in vivo yield mature proteins. Envelope glycoproteins are synthesized as an inactive precursor that is N-glycosylated and processed likely by host cell furin or by a furin-like protease in the Golgi to yield the mature SU and TM proteins. The cleavage site between SU and TM requires the minimal sequence [KR]-X-[KR]-R. Post-translationally, the transmembrane protein is palmitoylated.

It localises to the virion membrane. The protein resides in the host cell membrane. The surface protein (SU) attaches the virus to the host cell by binding to its receptor. This interaction triggers the refolding of the transmembrane protein (TM) and is thought to activate its fusogenic potential by unmasking its fusion peptide. Fusion occurs at the host cell plasma membrane. Functionally, the transmembrane protein (TM) acts as a class I viral fusion protein. Under the current model, the protein has at least 3 conformational states: pre-fusion native state, pre-hairpin intermediate state, and post-fusion hairpin state. During viral and target cell membrane fusion, the coiled coil regions (heptad repeats) assume a trimer-of-hairpins structure, positioning the fusion peptide in close proximity to the C-terminal region of the ectodomain. The formation of this structure appears to drive apposition and subsequent fusion of viral and target cell membranes. Membranes fusion leads to delivery of the nucleocapsid into the cytoplasm. The protein is Envelope glycoprotein gp160 (env) of Ovine maedi visna related virus (strain South Africa) (SA-OMVV).